Reading from the N-terminus, the 179-residue chain is uncharacterized protein (179 aa).

The first 19 residues, 1–19, serve as a signal peptide directing secretion; it reads MNTNVFRLLLLGSLFSLSA. Cys-20 carries N-palmitoyl cysteine lipidation. Cys-20 carries S-diacylglycerol cysteine lipidation.

The protein localises to the cell membrane. This is an uncharacterized protein from Escherichia coli (strain K12).